A 223-amino-acid chain; its full sequence is Phosphoenolpyruvate guanylyltransferase (223 aa).

The phosphoenolpyruvate site is built by Thr140, Gly156, and Ser159.

It belongs to the CofC family.

The catalysed reaction is phosphoenolpyruvate + GTP + H(+) = enolpyruvoyl-2-diphospho-5'-guanosine + diphosphate. It participates in cofactor biosynthesis; coenzyme F420 biosynthesis. Guanylyltransferase that catalyzes the activation of phosphoenolpyruvate (PEP) as enolpyruvoyl-2-diphospho-5'-guanosine, via the condensation of PEP with GTP. It is involved in the biosynthesis of coenzyme F420, a hydride carrier cofactor. The polypeptide is Phosphoenolpyruvate guanylyltransferase (Conexibacter woesei (strain DSM 14684 / CCUG 47730 / CIP 108061 / JCM 11494 / NBRC 100937 / ID131577)).